Consider the following 148-residue polypeptide: FAD synthase (148 aa).

ATP contacts are provided by residues 14–15 (VF), 19–22 (HVGH), and Asp-100.

This sequence belongs to the archaeal FAD synthase family. As to quaternary structure, homodimer. A divalent metal cation is required as a cofactor.

The catalysed reaction is FMN + ATP + H(+) = FAD + diphosphate. It participates in cofactor biosynthesis; FAD biosynthesis; FAD from FMN: step 1/1. In terms of biological role, catalyzes the transfer of the AMP portion of ATP to flavin mononucleotide (FMN) to produce flavin adenine dinucleotide (FAD) coenzyme. This chain is FAD synthase, found in Thermococcus sibiricus (strain DSM 12597 / MM 739).